We begin with the raw amino-acid sequence, 544 residues long: NADP-dependent malic enzyme (544 aa).

Residues 1–22 form a disordered region; the sequence is MQNKPSFILRNPSANKGTGFNN. The segment covering 12 to 21 has biased composition (polar residues); it reads PSANKGTGFN. The Proton donor role is filled by tyrosine 92. Arginine 145 contacts NAD(+). The active-site Proton acceptor is the lysine 163. A divalent metal cation-binding residues include glutamate 234, aspartate 235, and aspartate 258. Position 258 (aspartate 258) interacts with NAD(+). Residue 287 to 303 participates in NADP(+) binding; sequence VFLGAGSAGIGVADCIM. Asparagine 400 contacts NAD(+).

This sequence belongs to the malic enzymes family. As to quaternary structure, homotetramer. Requires Mg(2+) as cofactor. Mn(2+) is required as a cofactor. Expressed in the fruiting body.

The protein localises to the cytoplasm. The catalysed reaction is (S)-malate + NADP(+) = pyruvate + CO2 + NADPH. The enzyme catalyses oxaloacetate + H(+) = pyruvate + CO2. The sequence is that of NADP-dependent malic enzyme (malA) from Dictyostelium discoideum (Social amoeba).